The primary structure comprises 647 residues: UvrABC system protein C (647 aa).

A GIY-YIG domain is found at 16–95; the sequence is VEPGVYRFRD…IKEFDPRFNI (80 aa). One can recognise a UVR domain in the interval 208 to 243; it reads DRYARDLERKMSAAAEQLDFERAARLRDDLFALKRA.

It belongs to the UvrC family. As to quaternary structure, interacts with UvrB in an incision complex.

The protein resides in the cytoplasm. In terms of biological role, the UvrABC repair system catalyzes the recognition and processing of DNA lesions. UvrC both incises the 5' and 3' sides of the lesion. The N-terminal half is responsible for the 3' incision and the C-terminal half is responsible for the 5' incision. The chain is UvrABC system protein C from Mycobacterium leprae (strain Br4923).